We begin with the raw amino-acid sequence, 153 residues long: UPF0311 protein Rpal_1987 (153 aa).

Belongs to the UPF0311 family.

The polypeptide is UPF0311 protein Rpal_1987 (Rhodopseudomonas palustris (strain TIE-1)).